The following is a 203-amino-acid chain: Ribosomal RNA large subunit methyltransferase E (203 aa).

5 residues coordinate S-adenosyl-L-methionine: glycine 51, tryptophan 53, aspartate 69, aspartate 85, and aspartate 108. The active-site Proton acceptor is lysine 148.

This sequence belongs to the class I-like SAM-binding methyltransferase superfamily. RNA methyltransferase RlmE family.

It localises to the cytoplasm. The enzyme catalyses uridine(2552) in 23S rRNA + S-adenosyl-L-methionine = 2'-O-methyluridine(2552) in 23S rRNA + S-adenosyl-L-homocysteine + H(+). Specifically methylates the uridine in position 2552 of 23S rRNA at the 2'-O position of the ribose in the fully assembled 50S ribosomal subunit. This Methanosphaerula palustris (strain ATCC BAA-1556 / DSM 19958 / E1-9c) protein is Ribosomal RNA large subunit methyltransferase E.